The primary structure comprises 361 residues: Phosphoserine aminotransferase (361 aa).

Residue arginine 43 participates in L-glutamate binding. Residues 77 to 78 (AS), tryptophan 103, threonine 153, aspartate 173, and glutamine 196 each bind pyridoxal 5'-phosphate. An N6-(pyridoxal phosphate)lysine modification is found at lysine 197. 238-239 (NT) contacts pyridoxal 5'-phosphate.

It belongs to the class-V pyridoxal-phosphate-dependent aminotransferase family. SerC subfamily. Homodimer. It depends on pyridoxal 5'-phosphate as a cofactor.

Its subcellular location is the cytoplasm. The catalysed reaction is O-phospho-L-serine + 2-oxoglutarate = 3-phosphooxypyruvate + L-glutamate. It carries out the reaction 4-(phosphooxy)-L-threonine + 2-oxoglutarate = (R)-3-hydroxy-2-oxo-4-phosphooxybutanoate + L-glutamate. Its pathway is amino-acid biosynthesis; L-serine biosynthesis; L-serine from 3-phospho-D-glycerate: step 2/3. Catalyzes the reversible conversion of 3-phosphohydroxypyruvate to phosphoserine and of 3-hydroxy-2-oxo-4-phosphonooxybutanoate to phosphohydroxythreonine. The chain is Phosphoserine aminotransferase from Bacillus anthracis (strain A0248).